Here is a 666-residue protein sequence, read N- to C-terminus: Transketolase (666 aa).

His28 contributes to the substrate binding site. Thiamine diphosphate is bound by residues His68 and 116 to 118 (GPL). Asp157 is a binding site for Mg(2+). Thiamine diphosphate is bound by residues Gly158 and Asn187. Mg(2+) contacts are provided by Asn187 and Ile189. Substrate-binding residues include His262, Arg356, and Ser383. His262 lines the thiamine diphosphate pocket. Glu410 (proton donor) is an active-site residue. Residue Phe436 participates in thiamine diphosphate binding. 3 residues coordinate substrate: His460, Asp468, and Arg519.

It belongs to the transketolase family. Homodimer. The cofactor is Mg(2+). It depends on Ca(2+) as a cofactor. Mn(2+) is required as a cofactor. Requires Co(2+) as cofactor. Thiamine diphosphate serves as cofactor.

The enzyme catalyses D-sedoheptulose 7-phosphate + D-glyceraldehyde 3-phosphate = aldehydo-D-ribose 5-phosphate + D-xylulose 5-phosphate. Functionally, catalyzes the transfer of a two-carbon ketol group from a ketose donor to an aldose acceptor, via a covalent intermediate with the cofactor thiamine pyrophosphate. The chain is Transketolase (tkt) from Halalkalibacterium halodurans (strain ATCC BAA-125 / DSM 18197 / FERM 7344 / JCM 9153 / C-125) (Bacillus halodurans).